A 263-amino-acid chain; its full sequence is Putative ankyrin repeat domain-containing protein 20A12 pseudogene (263 aa).

2 coiled-coil regions span residues 65–121 (KKDL…MLES) and 171–263 (NQVF…IQLH).

This Homo sapiens (Human) protein is Putative ankyrin repeat domain-containing protein 20A12 pseudogene.